We begin with the raw amino-acid sequence, 204 residues long: Inner membrane protein BB_0250 (204 aa).

The next 5 membrane-spanning stretches (helical) occupy residues 17–37, 58–78, 101–121, 139–159, and 172–192; these read IAYS…NVPI, ILIF…SFYI, YYYG…PFGV, FIVS…TLSF, and IKII…IIYV.

It belongs to the DedA family.

It is found in the cell inner membrane. Functionally, required for proper cell division and envelope integrity. This chain is Inner membrane protein BB_0250, found in Borreliella burgdorferi (strain ATCC 35210 / DSM 4680 / CIP 102532 / B31) (Borrelia burgdorferi).